Here is a 248-residue protein sequence, read N- to C-terminus: mRNA-decapping protein OPG122 (248 aa).

Residues 45 to 227 (HKRVSVSAIL…IAKYALDTAK (183 aa)) form the Nudix hydrolase domain. Residues 125 to 147 (GGILKRGENVPECLSREIKEEVN) carry the Nudix box motif. A Mg(2+)-binding site is contributed by Glu-132. Glu-141 functions as the Nucleophile in the catalytic mechanism. Glu-145 is a Mn(2+) binding site. Asp-167 provides a ligand contact to Mg(2+).

This sequence belongs to the Nudix hydrolase family. The cofactor is Mg(2+). Mn(2+) serves as cofactor.

Its subcellular location is the host mitochondrion. Decapping enzyme that remove the protective 5'-cap from both host and viral mRNAs to commit transcripts for decay by the cellular exonuclease XRN1. Preferentially targets spliced mRNAs and since all viral genes are intronless, it preferentially targets host over viral transcripts. Acceleration of the turnover of cellular transcripts promotes the shutoff of host protein synthesis and therefore diminish the magnitude of antiviral response. The polypeptide is mRNA-decapping protein OPG122 (OPG122) (Variola virus (isolate Human/India/Ind3/1967) (VARV)).